The chain runs to 445 residues: Chromosomal replication initiator protein DnaA (445 aa).

The interval 1–73 is domain I, interacts with DnaA modulators; the sequence is MSTHLTETWE…VNALKLLTSK (73 aa). Residues 73 to 106 form a domain II region; the sequence is KKYNIDFIVTTEEKIEKNHNNEKSNIVVNDEMST. The segment at 107-323 is domain III, AAA+ region; that stretch reads MLNPKYTFDS…GALIRIVAFS (217 aa). Glycine 151, glycine 153, lysine 154, and threonine 155 together coordinate ATP. Residues 324–445 are domain IV, binds dsDNA; the sequence is SLTNKEISVD…KELNKRINQK (122 aa).

Belongs to the DnaA family. As to quaternary structure, oligomerizes as a right-handed, spiral filament on DNA at oriC.

The protein resides in the cytoplasm. In terms of biological role, plays an essential role in the initiation and regulation of chromosomal replication. ATP-DnaA binds to the origin of replication (oriC) to initiate formation of the DNA replication initiation complex once per cell cycle. Binds the DnaA box (a 9 base pair repeat at the origin) and separates the double-stranded (ds)DNA. Forms a right-handed helical filament on oriC DNA; dsDNA binds to the exterior of the filament while single-stranded (ss)DNA is stabiized in the filament's interior. The ATP-DnaA-oriC complex binds and stabilizes one strand of the AT-rich DNA unwinding element (DUE), permitting loading of DNA polymerase. After initiation quickly degrades to an ADP-DnaA complex that is not apt for DNA replication. Binds acidic phospholipids. The chain is Chromosomal replication initiator protein DnaA from Clostridium botulinum (strain Okra / Type B1).